A 414-amino-acid chain; its full sequence is Ribulose bisphosphate carboxylase large chain (414 aa).

Residues N102 and T152 each contribute to the substrate site. K154 functions as the Proton acceptor in the catalytic mechanism. Position 156 (K156) interacts with substrate. Residues K180, D182, and E183 each coordinate Mg(2+). Residue K180 is modified to N6-carboxylysine. The Proton acceptor role is filled by H273. The substrate site is built by R274, H306, and S358.

This sequence belongs to the RuBisCO large chain family. Type I subfamily. In terms of assembly, heterohexadecamer of 8 large chains and 8 small chains; disulfide-linked. The disulfide link is formed within the large subunit homodimers. Requires Mg(2+) as cofactor. Post-translationally, the disulfide bond which can form in the large chain dimeric partners within the hexadecamer appears to be associated with oxidative stress and protein turnover.

Its subcellular location is the plastid. It is found in the chloroplast. It carries out the reaction 2 (2R)-3-phosphoglycerate + 2 H(+) = D-ribulose 1,5-bisphosphate + CO2 + H2O. The enzyme catalyses D-ribulose 1,5-bisphosphate + O2 = 2-phosphoglycolate + (2R)-3-phosphoglycerate + 2 H(+). Its function is as follows. RuBisCO catalyzes two reactions: the carboxylation of D-ribulose 1,5-bisphosphate, the primary event in carbon dioxide fixation, as well as the oxidative fragmentation of the pentose substrate in the photorespiration process. Both reactions occur simultaneously and in competition at the same active site. This Antrophyum reticulatum (Ox-tongue fern) protein is Ribulose bisphosphate carboxylase large chain (rbcL).